We begin with the raw amino-acid sequence, 352 residues long: Isopentenyl-diphosphate delta-isomerase (352 aa).

6 to 7 (RK) is a binding site for substrate. FMN is bound by residues 63 to 65 (AMT), Ser93, and Asn122. 93–95 (SQR) contributes to the substrate binding site. Position 160 (Gln160) interacts with substrate. Residue Glu161 participates in Mg(2+) binding. FMN is bound by residues Lys192, Thr221, 271-273 (GIR), and 292-293 (SQ).

This sequence belongs to the IPP isomerase type 2 family. As to quaternary structure, homooctamer. Dimer of tetramers. FMN serves as cofactor. It depends on NADPH as a cofactor. Mg(2+) is required as a cofactor.

The protein resides in the cytoplasm. It catalyses the reaction isopentenyl diphosphate = dimethylallyl diphosphate. Its function is as follows. Involved in the biosynthesis of isoprenoids. Catalyzes the 1,3-allylic rearrangement of the homoallylic substrate isopentenyl (IPP) to its allylic isomer, dimethylallyl diphosphate (DMAPP). The sequence is that of Isopentenyl-diphosphate delta-isomerase from Pyrobaculum arsenaticum (strain DSM 13514 / JCM 11321 / PZ6).